Reading from the N-terminus, the 147-residue chain is Large ribosomal subunit protein uL15 (147 aa).

Residues 1-15 (MTDRVKKTRKLRGHV) are compositionally biased toward basic residues. A disordered region spans residues 1–34 (MTDRVKKTRKLRGHVSHGYGRVGKHRKHSGGRGL).

It belongs to the universal ribosomal protein uL15 family.

In Encephalitozoon cuniculi (strain GB-M1) (Microsporidian parasite), this protein is Large ribosomal subunit protein uL15 (RPL27A).